Here is a 337-residue protein sequence, read N- to C-terminus: MSKQEELLIQWGDRVKACLANLDIKSLGRVGVLLGGRSGEREISLMSGNGVLQALLSKGVDAHGFDPGLRNPTELATEKFDRIFISLHGRFGEDGTIQGLLELLELPYTGSGVLASALAIDKIATKQIWISNGLSTPEYEELTAKSDWNAVVKHLGLPLIVKPAHEGSSLGLTKVKSVEELPAAYQLAAGLDKKVIAETCIVGDELTCPLVGQGNSAEALPVIKIIPPQANYDFHNKYFSDETQYLCPTGLTAEINAAVQDLALAAYQTLGCRTWGRADVMLDKKTGKPYLLEMNTSPGMTSHSLVPMAAKAAGVEYADLVLWLLSQTLLQKEGART.

The 201-residue stretch at 126–326 (KQIWISNGLS…YADLVLWLLS (201 aa)) folds into the ATP-grasp domain. 152–207 (VKHLGLPLIVKPAHEGSSLGLTKVKSVEELPAAYQLAAGLDKKVIAETCIVGDELT) is a binding site for ATP. Mg(2+) is bound by residues Asp279, Glu293, and Asn295.

It belongs to the D-alanine--D-alanine ligase family. The cofactor is Mg(2+). Requires Mn(2+) as cofactor.

The protein localises to the cytoplasm. The catalysed reaction is 2 D-alanine + ATP = D-alanyl-D-alanine + ADP + phosphate + H(+). The protein operates within cell wall biogenesis; peptidoglycan biosynthesis. Functionally, cell wall formation. The polypeptide is D-alanine--D-alanine ligase (Polynucleobacter asymbioticus (strain DSM 18221 / CIP 109841 / QLW-P1DMWA-1) (Polynucleobacter necessarius subsp. asymbioticus)).